A 229-amino-acid polypeptide reads, in one-letter code: UPF0128 protein aq_756 (229 aa).

It belongs to the UPF0128 family.

This is UPF0128 protein aq_756 from Aquifex aeolicus (strain VF5).